The primary structure comprises 747 residues: DNA ligase (747 aa).

Residues 113 to 117, 161 to 162, and E190 each bind NAD(+); these read DRAYD and SI. The active-site N6-AMP-lysine intermediate is K192. Positions 213, 249, 364, and 388 each coordinate NAD(+). Zn(2+) contacts are provided by C479, C482, C495, and C501. The 88-residue stretch at 660–747 folds into the BRCT domain; that stretch reads TTNAPLSDLT…EHDDTLTWPP (88 aa).

The protein belongs to the NAD-dependent DNA ligase family. LigA subfamily. Requires Mg(2+) as cofactor. It depends on Mn(2+) as a cofactor.

The catalysed reaction is NAD(+) + (deoxyribonucleotide)n-3'-hydroxyl + 5'-phospho-(deoxyribonucleotide)m = (deoxyribonucleotide)n+m + AMP + beta-nicotinamide D-nucleotide.. DNA ligase that catalyzes the formation of phosphodiester linkages between 5'-phosphoryl and 3'-hydroxyl groups in double-stranded DNA using NAD as a coenzyme and as the energy source for the reaction. It is essential for DNA replication and repair of damaged DNA. This chain is DNA ligase, found in Haloquadratum walsbyi (strain DSM 16790 / HBSQ001).